The following is a 126-amino-acid chain: Precursor of CEP2 (126 aa).

An N-terminal signal peptide occupies residues 1–19 (MKLFIITVVTILTISRVFD). The propeptide occupies 20–80 (KTPATTEARK…ENNLKNRFIN (61 aa)). Proline 84 and proline 87 each carry hydroxyproline. Positions 96–105 (PRVLNNKFTN) are excised as a propeptide. Proline 109, proline 112, and proline 116 each carry hydroxyproline. Positions 121–126 (PGVVNV) are excised as a propeptide.

This sequence belongs to the C-terminally encoded plant signaling peptide (CEP) family. In terms of assembly, interacts with CEP receptors (e.g. CEPR1 and CEPR2). Post-translationally, the mature small signaling peptide is generated by proteolytic processing of the longer precursor. As to expression, mostly expressed in roots. Present in cotyledons, shoot apical meristem (SAM), leaves, inflorescence stems and flowers.

It is found in the secreted. Its subcellular location is the extracellular space. The protein resides in the apoplast. Functionally, extracellular signaling peptide that represses primary root growth rate. Negatively regulates the number of leaves and flowering, and modulates leaf morphology. Regulates systemic nitrogen (N)-demand signaling. Mediates up-regulation of genes involved in N uptake and assimilation pathways. In Arabidopsis thaliana (Mouse-ear cress), this protein is Precursor of CEP2.